The sequence spans 165 residues: Thiol peroxidase (165 aa).

A Thioredoxin domain is found at 18-165 (PQVGDVVTDF…PNYDAALAVL (148 aa)). Cys60 functions as the Cysteine sulfenic acid (-SOH) intermediate in the catalytic mechanism. Residues Cys60 and Cys94 are joined by a disulfide bond.

The protein belongs to the peroxiredoxin family. Tpx subfamily. Homodimer.

The enzyme catalyses a hydroperoxide + [thioredoxin]-dithiol = an alcohol + [thioredoxin]-disulfide + H2O. In terms of biological role, thiol-specific peroxidase that catalyzes the reduction of hydrogen peroxide and organic hydroperoxides to water and alcohols, respectively. Plays a role in cell protection against oxidative stress by detoxifying peroxides. The protein is Thiol peroxidase of Pasteurella multocida (strain Pm70).